The chain runs to 430 residues: Trigger factor (430 aa).

Residues 163 to 248 (GDTVVFDFAG…IHEIKAQELP (86 aa)) form the PPIase FKBP-type domain.

It belongs to the FKBP-type PPIase family. Tig subfamily.

It localises to the cytoplasm. The catalysed reaction is [protein]-peptidylproline (omega=180) = [protein]-peptidylproline (omega=0). Its function is as follows. Involved in protein export. Acts as a chaperone by maintaining the newly synthesized protein in an open conformation. Functions as a peptidyl-prolyl cis-trans isomerase. The chain is Trigger factor from Exiguobacterium sibiricum (strain DSM 17290 / CCUG 55495 / CIP 109462 / JCM 13490 / 255-15).